Reading from the N-terminus, the 152-residue chain is UPF0178 protein NIS_0137 (152 aa).

This sequence belongs to the UPF0178 family.

The polypeptide is UPF0178 protein NIS_0137 (Nitratiruptor sp. (strain SB155-2)).